Here is a 4250-residue protein sequence, read N- to C-terminus: Dynein axonemal heavy chain 1 (4250 aa).

The interval 1–73 (MEECNKEGPS…KSPLTGTDKK (73 aa)) is disordered. The interval 1–1527 (MEECNKEGPS…YIRAVNAEFI (1527 aa)) is stem. The span at 24–42 (PESHDLEKILQESNYHPER) shows a compositional bias: basic and acidic residues. The segment covering 46–55 (NPDPKTPPLP) has biased composition (pro residues). AAA stretches follow at residues 1528 to 1749 (YGYE…VISA), 1809 to 2042 (QAIR…NTVK), 2174 to 2434 (TMMP…VFQG), and 2532 to 2784 (DYNQ…LARH). A GPAGTGKT motif motif is present at residues 1566 to 1573 (GPAGTGKT). Residue 1566–1573 (GPAGTGKT) coordinates ATP. The short motif at 1616-1622 (CFDEFNR) is the CFDEFNR motif element. ATP contacts are provided by residues 1847 to 1854 (GPTGSGKS), 2212 to 2219 (GPTGTGKT), and 2571 to 2578 (GVGGSGRS). The interval 2799–3097 (FSILIGQKKM…EELEMKCEQC (299 aa)) is stalk. Residues 3045-3128 (LREAQDDLEV…QETVENLENM (84 aa)) adopt a coiled-coil conformation. AAA regions lie at residues 3182–3412 (LGNP…EIQA) and 3625–3844 (MQDF…QLKM).

This sequence belongs to the dynein heavy chain family. Consists of at least two heavy chains and a number of intermediate and light chains.

It is found in the cytoplasm. The protein localises to the cytoskeleton. Its subcellular location is the cilium axoneme. It localises to the cell projection. The protein resides in the cilium. It is found in the flagellum. Force generating protein of cilia required for sperm flagellum motility. Produces force towards the minus ends of microtubules. Dynein has ATPase activity; the force-producing power stroke is thought to occur on release of ADP. Required in spermatozoa for the formation of the inner dynein arms and biogenesis of the axoneme. The protein is Dynein axonemal heavy chain 1 of Mus musculus (Mouse).